The primary structure comprises 637 residues: Zinc finger protein rsv2 (637 aa).

Disordered stretches follow at residues 1 to 41, 145 to 164, 169 to 207, 221 to 363, 404 to 427, and 440 to 558; these read MDTT…SKMN, SNHQ…PTSA, IITA…QPFS, TGAI…STAL, QDSF…TRSY, and SVNP…GAQR. The span at 172–189 shows a compositional bias: low complexity; sequence ANSSPSGNAGSNASASMS. The segment covering 196 to 207 has biased composition (polar residues); the sequence is PSASTINDQPFS. Residues 279-296 show a composition bias toward basic and acidic residues; sequence SDLKRSLGHNQKSDRVSK. The span at 298 to 344 shows a compositional bias: polar residues; the sequence is VSPQHQANPSTLNNPLKTQNFDSSKNLYTDNKDSSLVSPTGLQSRME. Composition is skewed to basic and acidic residues over residues 345-355 and 404-413; these read QNPEVRAHPMK and QDSFNKESIK. Low complexity predominate over residues 455–471; it reads VPSNTTISSSPPLTSPV. Composition is skewed to polar residues over residues 472–498 and 508–527; these read KTSA…QSAA and YYNT…QKVS. The span at 544–554 shows a compositional bias: low complexity; that stretch reads TTPTNSSTTAT. The C2H2-type 1 zinc-finger motif lies at 572–603; it reads VRCTLQNRVTGEICNTVFSRTYDLIRHQDTIH. A C2H2-type 2; degenerate zinc finger spans residues 610–635; sequence FRCEICGDQRHFSRHDALVRHLRVKH.

It localises to the nucleus. The polypeptide is Zinc finger protein rsv2 (rsv2) (Schizosaccharomyces pombe (strain 972 / ATCC 24843) (Fission yeast)).